Here is a 185-residue protein sequence, read N- to C-terminus: Ribosome-recycling factor (185 aa).

This sequence belongs to the RRF family.

It is found in the cytoplasm. Functionally, responsible for the release of ribosomes from messenger RNA at the termination of protein biosynthesis. May increase the efficiency of translation by recycling ribosomes from one round of translation to another. The protein is Ribosome-recycling factor of Wolbachia pipientis wMel.